Here is a 111-residue protein sequence, read N- to C-terminus: P antigen family member 2 (111 aa).

Positions 1-66 (MSELLRARSQ…NQAVPAFQGP (66 aa)) are disordered. A compositionally biased stretch (polar residues) spans 8–24 (RSQSSERGNDQESSQPV).

Belongs to the GAGE family.

This chain is P antigen family member 2 (PAGE2), found in Homo sapiens (Human).